A 167-amino-acid polypeptide reads, in one-letter code: MKGNNFNLLGNITWLWMNSSLHKEWSCKLLACNVIPAIENEQYMLLVDNGIPIAYCSWADLNLETEVKYIKDISSLTSDEWQSGDRRWIIDWVAPFGHSQLLYKKMCQKYPDMIVRAIRFYPKQKELGKITYFKGGKLDKKTAKERFDIYQEELATALKNEFNFIEK.

Residues histidine 22 and aspartate 91 contribute to the active site.

Belongs to the RTX toxin acyltransferase family.

The protein localises to the cytoplasm. It carries out the reaction a fatty acyl-[ACP] + L-lysyl-[protein] = N(6)-(fatty acyl)-L-lysyl-[protein] + holo-[ACP] + H(+). Involved in fatty acylation of the protoxin (LktA) at two internal lysine residues, thereby converting it to the active toxin. In Mannheimia haemolytica (Pasteurella haemolytica), this protein is Leukotoxin-activating lysine-acyltransferase LktC serotype T3 (lktC).